Reading from the N-terminus, the 95-residue chain is Histone-like DNA-binding protein (95 aa).

The protein belongs to the bacterial histone-like protein family.

This chain is Histone-like DNA-binding protein, found in Rickettsia rickettsii.